The following is a 259-amino-acid chain: UPF0246 protein SG0407 (259 aa).

This sequence belongs to the UPF0246 family.

This Sodalis glossinidius (strain morsitans) protein is UPF0246 protein SG0407.